The primary structure comprises 74 residues: Insertion element IS986 uncharacterized 8.2 kDa protein (74 aa).

The protein is Insertion element IS986 uncharacterized 8.2 kDa protein of Mycobacterium tuberculosis.